The sequence spans 431 residues: Dihydroorotase (431 aa).

Residues His59 and His61 each coordinate Zn(2+). Residues 61-63 and Asn93 contribute to the substrate site; that span reads HLR. The Zn(2+) site is built by Asp151, His178, His231, and Asp304. The active site involves Asp304. Residues His308 and 322–323 contribute to the substrate site; that span reads FG.

Belongs to the metallo-dependent hydrolases superfamily. DHOase family. Class I DHOase subfamily. Requires Zn(2+) as cofactor.

It catalyses the reaction (S)-dihydroorotate + H2O = N-carbamoyl-L-aspartate + H(+). Its pathway is pyrimidine metabolism; UMP biosynthesis via de novo pathway; (S)-dihydroorotate from bicarbonate: step 3/3. Functionally, catalyzes the reversible cyclization of carbamoyl aspartate to dihydroorotate. The sequence is that of Dihydroorotase from Caldanaerobacter subterraneus subsp. tengcongensis (strain DSM 15242 / JCM 11007 / NBRC 100824 / MB4) (Thermoanaerobacter tengcongensis).